The sequence spans 110 residues: UPF0060 membrane protein Mfla_2554 (110 aa).

Helical transmembrane passes span 7–27 (VALF…PYLW), 33–53 (SPLL…LLTL), 61–81 (VYAA…WVVD), and 83–103 (IIPS…MAII).

Belongs to the UPF0060 family.

The protein resides in the cell inner membrane. The protein is UPF0060 membrane protein Mfla_2554 of Methylobacillus flagellatus (strain ATCC 51484 / DSM 6875 / VKM B-1610 / KT).